The following is a 1060-amino-acid chain: MASALNSKINPPGTCQGSKADGGAGWRMDCDPQMHVKMCKKIAQLTKVIYALNTRQDEAEASMEALREAHQEELQNAVAETKARLLQEQGCAEEEALLQRIQALESALELQKRLTEEALAESASCRLETKERELRVEAEHAERVLTLSREMLELKADYERRLQHLTSHEATPQGRLPQESPETKSEPGQGPEMQEVLLEVQRLRVENQQLSKDYARKAEELQATYERENEAIRQAMQQSVSQALWQWQEKESDLRKNFQVQESALQAQVRKLEGDLEHRGRKISDLKKYAQKLKERIQDLDVQLKEARQENSELKGTAKKLGEKLAVAKDRMMLQECRGTQQTDAMKTELVSENKVLREENDLEAGNLHPQQDQSCLKECPCMKGGTDMQTKKEASAETEYMKQQYEEDLRKIKHQTEEEKKHLKDQLVKRLEDLVKKHTVEIKSVRSSVEAERKKLQREVEAQLEEVRKKSEKEIKQLEEEKAALNVKLQNSLLEVLRLEEFIQQNKTRPTGAEESPQELGRQHCSILETQDPCLKLDETSPRGEEYQDKLAAEEGTSSDEEERTKVLLKEGSDPQPPLGSLLKEKTSKIQRLEEDWQSQKAKLQAQVSQMQQALEQCTSNYREDLQALKQLSDLEREKLQRELQETTQQNHAMKAQLEASHQRALRMLEKARHQELKATEERLKKESSHSLQIQHQTHRLELQALEEKARQELQEERERMQAQQALLLESLRQELSEQQAACSGHQKDLEALQAELRALGRQQASSQCPGDSKDHIIATEERGGPGQAGSPPGAAGQGSGEGCGLWEENAQLQDAVRRLRAEVEQHQQEAQKLRDQRRFLEETQQAQRAREVETLRQEHRKEMQAMVADFSSAQAQLQARLAALEAELKDSGEKPGKGASRPEDLQLIGRLQTRLKEREDIIKQLTEERRFHYAAFPSAMSHRNRSFSFNPHPGYLTPSMKKKKVEDVPSRVVSVPNLASYAKNFLSGDLSSRINAPPITTSPSLDPSPSCGRTYKPNQSTDAKTATRTPDGETAQAKEVQQKQGSPHQEWFTKYFSF.

Polar residues predominate over residues 1–17 (MASALNSKINPPGTCQG). A disordered region spans residues 1–24 (MASALNSKINPPGTCQGSKADGGA). A coiled-coil region spans residues 51-159 (ALNTRQDEAE…EMLELKADYE (109 aa)). The interval 165–191 (LTSHEATPQGRLPQESPETKSEPGQGP) is disordered. Coiled-coil stretches lie at residues 192-333 (EMQE…DRMM) and 402-502 (MKQQ…RLEE). 3 disordered regions span residues 532–566 (QDPC…EERT), 681–700 (TEER…HQTH), and 762–803 (GRQQ…GSGE). Composition is skewed to basic and acidic residues over residues 536 to 554 (LKLD…KLAA), 681 to 690 (TEERLKKESS), and 773 to 785 (DSKD…EERG). Residues 584–769 (LKEKTSKIQR…ALGRQQASSQ (186 aa)) are a coiled coil. The stretch at 806-934 (GLWEENAQLQ…KQLTEERRFH (129 aa)) forms a coiled coil. Composition is skewed to polar residues over residues 994–1009 (SRIN…SLDP) and 1018–1030 (KPNQ…TATR). The segment at 994–1050 (SRINAPPITTSPSLDPSPSCGRTYKPNQSTDAKTATRTPDGETAQAKEVQQKQGSPH) is disordered.

The protein belongs to the FAM184 family.

In Homo sapiens (Human), this protein is Protein FAM184B (FAM184B).